The following is an 88-amino-acid chain: MAAKKTESLSFDAALGELEQIVQQLEQGDLPLETALKQFERGIQLARVSKQKLEQAEQQVQILLQQGEQEKLTPFTVEQTSGQNAEEE.

Belongs to the XseB family. Heterooligomer composed of large and small subunits.

The protein localises to the cytoplasm. The enzyme catalyses Exonucleolytic cleavage in either 5'- to 3'- or 3'- to 5'-direction to yield nucleoside 5'-phosphates.. Functionally, bidirectionally degrades single-stranded DNA into large acid-insoluble oligonucleotides, which are then degraded further into small acid-soluble oligonucleotides. This is Exodeoxyribonuclease 7 small subunit from Tolumonas auensis (strain DSM 9187 / NBRC 110442 / TA 4).